We begin with the raw amino-acid sequence, 21 residues long: RQRVEELSKFSKKGAAARRRK.

A disordered region spans residues 1 to 21 (RQRVEELSKFSKKGAAARRRK). Residues 10–21 (FSKKGAAARRRK) show a composition bias toward basic residues.

The protein localises to the secreted. Its function is as follows. Strong antimicrobial activity against several Gram-positive and Gram-negative bacteria and fungi. The chain is Misgurin from Misgurnus anguillicaudatus (Oriental weatherloach).